The following is a 191-amino-acid chain: Protein Ves (191 aa).

This sequence belongs to the Ves family.

The sequence is that of Protein Ves from Escherichia coli (strain K12 / MC4100 / BW2952).